Reading from the N-terminus, the 370-residue chain is Gap junction delta-4 protein (370 aa).

Over Met-1–Thr-19 the chain is Cytoplasmic. The chain crosses the membrane as a helical span at residues Met-20 to Ala-40. Residues Gly-41 to Arg-76 lie on the Extracellular side of the membrane. A helical transmembrane segment spans residues Phe-77–Leu-97. The Cytoplasmic portion of the chain corresponds to His-98–His-146. The helical transmembrane segment at Leu-147 to Phe-167 threads the bilayer. Topologically, residues Leu-168 to Leu-196 are extracellular. A helical transmembrane segment spans residues Leu-197–Val-217. At Cys-218 to Val-370 the chain is on the cytoplasmic side. A disordered region spans residues Arg-227–Val-370. The segment covering Pro-246–Glu-260 has biased composition (basic and acidic residues). Low complexity predominate over residues Pro-331 to Ser-345.

The protein belongs to the connexin family. Delta-type subfamily. A connexon is composed of a hexamer of connexins.

The protein resides in the cell membrane. It localises to the cell junction. The protein localises to the gap junction. In terms of biological role, one gap junction consists of a cluster of closely packed pairs of transmembrane channels, the connexons, through which materials of low MW diffuse from one cell to a neighboring cell. In Macaca fascicularis (Crab-eating macaque), this protein is Gap junction delta-4 protein (GJD4).